Here is a 198-residue protein sequence, read N- to C-terminus: V-type proton ATPase subunit E (198 aa).

The protein belongs to the V-ATPase E subunit family.

Its function is as follows. Produces ATP from ADP in the presence of a proton gradient across the membrane. This is V-type proton ATPase subunit E from Borrelia turicatae (strain 91E135).